Here is a 250-residue protein sequence, read N- to C-terminus: Proteasome subunit alpha type-2 (250 aa).

Lysine 108 is covalently cross-linked (Glycyl lysine isopeptide (Lys-Gly) (interchain with G-Cter in ubiquitin)).

The protein belongs to the peptidase T1A family. As to quaternary structure, the 26S proteasome consists of a 20S proteasome core and two 19S regulatory subunits. The 20S proteasome core is composed of 28 subunits that are arranged in four stacked rings, resulting in a barrel-shaped structure. The two end rings are each formed by seven alpha subunits, and the two central rings are each formed by seven beta subunits. The catalytic chamber with the active sites is on the inside of the barrel.

Its subcellular location is the cytoplasm. The protein localises to the nucleus. In terms of biological role, the proteasome degrades poly-ubiquitinated proteins in the cytoplasm and in the nucleus. It is essential for the regulated turnover of proteins and for the removal of misfolded proteins. The proteasome is a multicatalytic proteinase complex that is characterized by its ability to cleave peptides with Arg, Phe, Tyr, Leu, and Glu adjacent to the leaving group at neutral or slightly basic pH. It has an ATP-dependent proteolytic activity. The sequence is that of Proteasome subunit alpha type-2 (PRE8) from Saccharomyces cerevisiae (strain ATCC 204508 / S288c) (Baker's yeast).